The sequence spans 362 residues: Microfibril-associated glycoprotein 3 (362 aa).

Positions 1–19 (MKLHCCLFTLVASIIVPAA) are cleaved as a signal peptide. Over 20-146 (FVLEDVDFNQ…TLRVIFTSGD (127 aa)) the chain is Extracellular. N-linked (GlcNAc...) asparagine glycosylation is found at N36, N41, and N110. Residues 45 to 137 (PSSFELSASS…SPIRASYSVT (93 aa)) enclose the Ig-like C2-type domain. The cysteines at positions 73 and 124 are disulfide-linked. Residues 147–167 (MSVYYMIVCLIAFTITLILNV) traverse the membrane as a helical segment. Topologically, residues 168–362 (TRLCMMSSHL…KDGAYENSQL (195 aa)) are cytoplasmic. Disordered regions lie at residues 282–306 (GIYVINPEMGRSNSPGGDSDDGSLN) and 319–362 (HLQS…NSQL). Residues 319 to 337 (HLQSETKSIDTESQGSSHF) are compositionally biased toward polar residues.

In terms of processing, glycosylated.

It localises to the cell membrane. Component of the elastin-associated microfibrils. This is Microfibril-associated glycoprotein 3 (MFAP3) from Pongo abelii (Sumatran orangutan).